A 368-amino-acid chain; its full sequence is Outer membrane protein assembly factor BamC (368 aa).

The first 18 residues, 1 to 18 (MTTKFFIGTAIAVSVLSA), serve as a signal peptide directing secretion. The N-palmitoyl cysteine moiety is linked to residue C19. C19 is lipidated: S-diacylglycerol cysteine.

It belongs to the BamC family. In terms of assembly, part of the Bam complex.

The protein localises to the cell outer membrane. Functionally, part of the outer membrane protein assembly complex, which is involved in assembly and insertion of beta-barrel proteins into the outer membrane. The chain is Outer membrane protein assembly factor BamC from Pseudoalteromonas atlantica (strain T6c / ATCC BAA-1087).